The following is an 82-amino-acid chain: Ubiquinol-cytochrome-c reductase complex assembly factor 3 (82 aa).

At 1–6 (METVRR) the chain is on the mitochondrial matrix side. A helical transmembrane segment spans residues 7–29 (IVKGTLLLGFCTGIGGDLWVLVA). The Mitochondrial intermembrane segment spans residues 30-82 (PGQERRLEMRMNYPEANPPMLAEAHKRNEMVLKVIEESAKTNENMARRSPWSS).

Belongs to the UQCC3 family. As to quaternary structure, associates with the ubiquinol-cytochrome c reductase complex (mitochondrial respiratory chain complex III or cytochrome b-c1 complex).

It localises to the mitochondrion inner membrane. Required for the assembly of the ubiquinol-cytochrome c reductase complex (mitochondrial respiratory chain complex III or cytochrome b-c1 complex), mediating cytochrome b recruitment and probably stabilization within the complex. Thereby, plays an important role in ATP production by mitochondria. Cardiolipin-binding protein, it may also control the cardiolipin composition of mitochondria membranes and their morphology. In Xenopus laevis (African clawed frog), this protein is Ubiquinol-cytochrome-c reductase complex assembly factor 3.